A 141-amino-acid chain; its full sequence is Vesicle-associated membrane protein 4 (141 aa).

The tract at residues 1–51 is disordered; the sequence is MPPKFKRHLNDDDVTGSVKSERRNLLEDDSDEEEDFFLRGPSGPRFGPRND. Residues 1-115 lie on the Cytoplasmic side of the membrane; it reads MPPKFKRHLN…RRQMWWRGCK (115 aa). Phosphoserine is present on residues S17 and S30. Residues 52-112 form the v-SNARE coiled-coil homology domain; that stretch reads KIKHVQNQVD…KQLRRQMWWR (61 aa). A helical; Anchor for type IV membrane protein transmembrane segment spans residues 116–136; the sequence is IKAIMALVAAILLLVIIILIV. Over 137–141 the chain is Vesicular; that stretch reads MKYRT.

This sequence belongs to the synaptobrevin family. In terms of assembly, identified in a complex containing STX6, STX12, VAMP4 and VTI1A. Interacts with BAIAP3; this interaction is increased in the presence of calcium.

The protein resides in the golgi apparatus. The protein localises to the trans-Golgi network membrane. In terms of biological role, involved in the pathway that functions to remove an inhibitor (probably synaptotagmin-4) of calcium-triggered exocytosis during the maturation of secretory granules. May be a marker for this sorting pathway that is critical for remodeling the secretory response of granule. In Homo sapiens (Human), this protein is Vesicle-associated membrane protein 4 (VAMP4).